A 360-amino-acid polypeptide reads, in one-letter code: Protein NDRG2 (360 aa).

The disordered stretch occupies residues 325 to 360 (RTASLSSEGNRSRSRTLSQSSESGGGPPAPLAEVTC).

This sequence belongs to the NDRG family.

It is found in the cytoplasm. Its function is as follows. Contributes to the regulation of the Wnt signaling pathway. Down-regulates CTNNB1-mediated transcriptional activation of target genes. May be involved in neuron differentiation. This Xenopus tropicalis (Western clawed frog) protein is Protein NDRG2.